The sequence spans 315 residues: Ribose-phosphate pyrophosphokinase (315 aa).

ATP contacts are provided by residues Asp37–Glu39 and Arg96–Gln97. Positions 131 and 170 each coordinate Mg(2+). Lys194 is an active-site residue. D-ribose 5-phosphate-binding positions include Arg196, Asp220, and Asp224–Thr228.

The protein belongs to the ribose-phosphate pyrophosphokinase family. Class I subfamily. As to quaternary structure, homohexamer. It depends on Mg(2+) as a cofactor.

It is found in the cytoplasm. The catalysed reaction is D-ribose 5-phosphate + ATP = 5-phospho-alpha-D-ribose 1-diphosphate + AMP + H(+). The protein operates within metabolic intermediate biosynthesis; 5-phospho-alpha-D-ribose 1-diphosphate biosynthesis; 5-phospho-alpha-D-ribose 1-diphosphate from D-ribose 5-phosphate (route I): step 1/1. Functionally, involved in the biosynthesis of the central metabolite phospho-alpha-D-ribosyl-1-pyrophosphate (PRPP) via the transfer of pyrophosphoryl group from ATP to 1-hydroxyl of ribose-5-phosphate (Rib-5-P). This is Ribose-phosphate pyrophosphokinase from Yersinia pestis.